Here is a 206-residue protein sequence, read N- to C-terminus: Sclerostin domain-containing protein 1 (206 aa).

A signal peptide spans 1–23; the sequence is MLPPAIHFYLLPLACILMKSCLA. Asparagine 47 is a glycosylation site (N-linked (GlcNAc...) asparagine). 4 disulfide bridges follow: cysteine 75-cysteine 133, cysteine 89-cysteine 147, cysteine 100-cysteine 163, and cysteine 104-cysteine 165. Residues 75 to 170 form the CTCK domain; that stretch reads CRELRSTKYI…TACKCKRYTR (96 aa). An N-linked (GlcNAc...) asparagine glycan is attached at asparagine 173. Positions 176–206 are disordered; the sequence is SHNFESMSPAKPVQHHRERKRASKSSKHSMS. Residues 188–206 show a composition bias toward basic residues; it reads VQHHRERKRASKSSKHSMS.

The protein belongs to the sclerostin family. Interacts with BMP2, BMP4, BMP6 and BMP7 with high affinity.

The protein localises to the secreted. Its function is as follows. Directly antagonizes activity of BMP2, BMP4, BMP6 and BMP7 in a dose-dependent manner. Enhances Wnt signaling and inhibits TGF-beta signaling. May be involved in the onset of endometrial receptivity for implantation/sensitization for the decidual cell reaction. The chain is Sclerostin domain-containing protein 1 (SOSTDC1) from Pongo abelii (Sumatran orangutan).